Consider the following 366-residue polypeptide: tRNA/tmRNA (uracil-C(5))-methyltransferase (366 aa).

Residues Gln189, Tyr217, Asn222, Glu238, and Asp298 each coordinate S-adenosyl-L-methionine. The active-site Nucleophile is Cys323. Residue Glu357 is the Proton acceptor of the active site.

It belongs to the class I-like SAM-binding methyltransferase superfamily. RNA M5U methyltransferase family. TrmA subfamily.

It carries out the reaction uridine(54) in tRNA + S-adenosyl-L-methionine = 5-methyluridine(54) in tRNA + S-adenosyl-L-homocysteine + H(+). The enzyme catalyses uridine(341) in tmRNA + S-adenosyl-L-methionine = 5-methyluridine(341) in tmRNA + S-adenosyl-L-homocysteine + H(+). Dual-specificity methyltransferase that catalyzes the formation of 5-methyluridine at position 54 (m5U54) in all tRNAs, and that of position 341 (m5U341) in tmRNA (transfer-mRNA). The sequence is that of tRNA/tmRNA (uracil-C(5))-methyltransferase from Idiomarina loihiensis (strain ATCC BAA-735 / DSM 15497 / L2-TR).